The primary structure comprises 377 residues: 3-dehydroquinate synthase (377 aa).

NAD(+)-binding positions include 113–117 (GVIGD), 137–138 (TT), lysine 150, and lysine 159. Zn(2+)-binding residues include glutamate 192, histidine 254, and histidine 273.

Belongs to the sugar phosphate cyclases superfamily. Dehydroquinate synthase family. Co(2+) is required as a cofactor. It depends on Zn(2+) as a cofactor. The cofactor is NAD(+).

The protein resides in the cytoplasm. The catalysed reaction is 7-phospho-2-dehydro-3-deoxy-D-arabino-heptonate = 3-dehydroquinate + phosphate. The protein operates within metabolic intermediate biosynthesis; chorismate biosynthesis; chorismate from D-erythrose 4-phosphate and phosphoenolpyruvate: step 2/7. Catalyzes the conversion of 3-deoxy-D-arabino-heptulosonate 7-phosphate (DAHP) to dehydroquinate (DHQ). This Bartonella bacilliformis (strain ATCC 35685 / KC583 / Herrer 020/F12,63) protein is 3-dehydroquinate synthase.